The sequence spans 1050 residues: Calmodulin-binding transcription activator 2 (1050 aa).

The CG-1 DNA-binding region spans 15–141 (IKQLLSEAQH…YLEVKGNRMS (127 aa)). Composition is skewed to polar residues over residues 141 to 171 (STSG…SSIL) and 183 to 196 (SRQA…NPEP). Disordered stretches follow at residues 141-196 (STSG…NPEP) and 223-246 (NRDG…SGDV). ANK repeat units follow at residues 661–690 (DGQG…SINF) and 694–723 (NGWS…DAGA). 2 IQ domains span residues 870 to 899 (VHAA…RIVK) and 893 to 922 (IRQR…SVGL). The interval 918–940 (WSVGLLEKIILRWRRKGSGLRGF) is calmodulin-binding. A coiled-coil region spans residues 957–985 (QEDDYDFLKEGRKQTEERLQKALTRVKSM). Ser-984 bears the Phosphoserine mark.

This sequence belongs to the CAMTA family. As to expression, expressed in roots, stems, old leaves, petals, sepals, top of carpels, stigmas, stamen filaments, anthers and siliques, but not in pollen.

It localises to the nucleus. Its function is as follows. Transcription activator that binds to the DNA consensus sequence 5'-[ACG]CGCG[GTC]-3'. Regulates transcriptional activity in response to calcium signals. Binds calmodulin in a calcium-dependent manner. Involved in freezing tolerance in association with CAMTA1 and CAMTA3. Contributes together with CAMTA1 and CAMTA3 to the positive regulation of the cold-induced expression of DREB1A/CBF3, DREB1B/CBF1 and DREB1C/CBF2. Involved together with CAMTA3 and CAMTA4 in the positive regulation of a general stress response. Involved in tolerance to aluminum. Binds to the promoter of ALMT1 transporter and contributes to the positive regulation of aluminum-induced expression of ALMT1. In Arabidopsis thaliana (Mouse-ear cress), this protein is Calmodulin-binding transcription activator 2.